Consider the following 198-residue polypeptide: MFLLRPPTPAQVAAFVARSREQAPSYAETGWSLDGRTPDWARSGRHRVRVGEGEACWERAKAALRGGQMFQDWVLRPHGEASTPLSRQGATVVLLVRHFGPWGRRKWGLYSLMTNRVLYLVDEPDRYGFGYGTLPGHLVRGEERFLLERDAGGAVWFDLTTFSRAALPFSRFAQPLVGAAQRRGARHYARMLVRAAGC.

This sequence belongs to the UPF0548 family.

The chain is UPF0548 protein DR_2035 from Deinococcus radiodurans (strain ATCC 13939 / DSM 20539 / JCM 16871 / CCUG 27074 / LMG 4051 / NBRC 15346 / NCIMB 9279 / VKM B-1422 / R1).